Here is a 520-residue protein sequence, read N- to C-terminus: GMP synthase [glutamine-hydrolyzing] (520 aa).

The Glutamine amidotransferase type-1 domain occupies 9–202 (HVLIVDFGSQ…THKIAGLKGD (194 aa)). C86 serves as the catalytic Nucleophile. Residues H176 and E178 contribute to the active site. The GMPS ATP-PPase domain occupies 203 to 395 (WTMKAFREEA…LGLPPQFVGR (193 aa)). Position 230 to 236 (230 to 236 (SGGVDSS)) interacts with ATP.

Homodimer.

The catalysed reaction is XMP + L-glutamine + ATP + H2O = GMP + L-glutamate + AMP + diphosphate + 2 H(+). The protein operates within purine metabolism; GMP biosynthesis; GMP from XMP (L-Gln route): step 1/1. Functionally, catalyzes the synthesis of GMP from XMP. The polypeptide is GMP synthase [glutamine-hydrolyzing] (Phenylobacterium zucineum (strain HLK1)).